Here is a 261-residue protein sequence, read N- to C-terminus: Carbonic anhydrase 1 (261 aa).

N-acetylalanine is present on alanine 2. An Alpha-carbonic anhydrase domain is found at 4 to 261 (PDWGYDDKNG…LKGRTVRASF (258 aa)). Histidine 65 (proton donor/acceptor) is an active-site residue. The Zn(2+) site is built by histidine 95, histidine 97, and histidine 120. Residues threonine 200 and 200 to 201 (TH) each bind substrate. The disordered stretch occupies residues 238 to 261 (NPVPIQRNNRPTQPLKGRTVRASF).

The protein belongs to the alpha-carbonic anhydrase family. Zn(2+) serves as cofactor.

The protein resides in the cytoplasm. It catalyses the reaction hydrogencarbonate + H(+) = CO2 + H2O. It carries out the reaction urea = cyanamide + H2O. Its activity is regulated as follows. Inhibited by acetazolamide. In terms of biological role, catalyzes the reversible hydration of carbon dioxide. Can hydrate cyanamide to urea. The polypeptide is Carbonic anhydrase 1 (CA1) (Macaca mulatta (Rhesus macaque)).